A 132-amino-acid polypeptide reads, in one-letter code: MPKQVIIPPGASTPIAPFVPGTLADGVVYVSGTLPFDKANNVVYPGDPKAQTRHVLETIRHVIETAGGTMEDVTFNSIFITDWKNYAAINEIYAEFFPGDKPARFCIQCGLVKPEALVEIATVAHIGPSGGA.

It belongs to the RutC family.

The enzyme catalyses (Z)-3-aminoacrylate + H2O + H(+) = 3-oxopropanoate + NH4(+). In terms of biological role, involved in pyrimidine catabolism. Catalyzes the deamination of 3-aminoacrylate to malonic semialdehyde, a reaction that can also occur spontaneously. RutC may facilitate the reaction and modulate the metabolic fitness, rather than catalyzing essential functions. This Cronobacter turicensis (strain DSM 18703 / CCUG 55852 / LMG 23827 / z3032) protein is 3-aminoacrylate deaminase RutC.